The primary structure comprises 240 residues: Ubiquinone biosynthesis O-methyltransferase (240 aa).

Arg36, Gly66, Asp87, and Met129 together coordinate S-adenosyl-L-methionine.

This sequence belongs to the methyltransferase superfamily. UbiG/COQ3 family.

The catalysed reaction is a 3-demethylubiquinol + S-adenosyl-L-methionine = a ubiquinol + S-adenosyl-L-homocysteine + H(+). It catalyses the reaction a 3-(all-trans-polyprenyl)benzene-1,2-diol + S-adenosyl-L-methionine = a 2-methoxy-6-(all-trans-polyprenyl)phenol + S-adenosyl-L-homocysteine + H(+). Its pathway is cofactor biosynthesis; ubiquinone biosynthesis. Its function is as follows. O-methyltransferase that catalyzes the 2 O-methylation steps in the ubiquinone biosynthetic pathway. This Pelagibacter ubique (strain HTCC1062) protein is Ubiquinone biosynthesis O-methyltransferase.